The chain runs to 263 residues: Hydroxyethylthiazole kinase (263 aa).

Position 41 (Met41) interacts with substrate. Residues Arg117 and Thr163 each contribute to the ATP site. Residue Gly190 participates in substrate binding.

This sequence belongs to the Thz kinase family. Mg(2+) is required as a cofactor.

It catalyses the reaction 5-(2-hydroxyethyl)-4-methylthiazole + ATP = 4-methyl-5-(2-phosphooxyethyl)-thiazole + ADP + H(+). It participates in cofactor biosynthesis; thiamine diphosphate biosynthesis; 4-methyl-5-(2-phosphoethyl)-thiazole from 5-(2-hydroxyethyl)-4-methylthiazole: step 1/1. Its function is as follows. Catalyzes the phosphorylation of the hydroxyl group of 4-methyl-5-beta-hydroxyethylthiazole (THZ). The sequence is that of Hydroxyethylthiazole kinase from Exiguobacterium sp. (strain ATCC BAA-1283 / AT1b).